We begin with the raw amino-acid sequence, 187 residues long: uncharacterized protein (187 aa).

This is an uncharacterized protein from Acanthamoeba polyphaga mimivirus (APMV).